Consider the following 917-residue polypeptide: DNA topoisomerase 1 beta (917 aa).

Residues 1–368 (MATEAFVKPV…SLPSGDGQKK (368 aa)) are disordered. Polar residues predominate over residues 32-63 (RNSNTAATTNRPSPINNAMRNSAIGSTKSSPP). The span at 66-82 (SPLTSPNRSASSSTRSS) shows a compositional bias: low complexity. Polar residues predominate over residues 89 to 100 (PSSSSVQRSTLK). 2 stretches are compositionally biased toward basic and acidic residues: residues 102–116 (PLRDDRSVVAKERNG) and 134–149 (DKPLSARLKLDSKEVT). Polar residues predominate over residues 150–170 (KQPSSSGRGSTQQAVQKSNMR). The segment covering 177–187 (YTKKKVLDERA) has biased composition (basic and acidic residues). Polar residues predominate over residues 189–205 (MSSTVQTKTSVGTSSSK). Basic and acidic residues-rich tracts occupy residues 256-265 (KLSEPARPVK) and 296-307 (VKEDNSDGDDHV). Serine 301 bears the Phosphoserine mark. A compositionally biased stretch (low complexity) spans 316 to 338 (DSSNNKSSSAKPSSSKMIASSSR). Interaction with DNA regions lie at residues 575-576 (KY), 638-643 (RAGNEK), and 729-731 (TAK). The Topo IB-type catalytic domain maps to 582–912 (SSSLKGQSDK…MDVDPEFRFC (331 aa)). The stretch at 779–858 (VSKSHGAQVE…ERDMQTKEDM (80 aa)) forms a coiled coil. Tyrosine 870 (O-(3'-phospho-DNA)-tyrosine intermediate) is an active-site residue.

Belongs to the type IB topoisomerase family.

The protein localises to the nucleus. The catalysed reaction is ATP-independent breakage of single-stranded DNA, followed by passage and rejoining.. Its function is as follows. Releases the supercoiling and torsional tension of DNA introduced during the DNA replication and transcription by transiently cleaving and rejoining one strand of the DNA duplex. Introduces a single-strand break via transesterification at a target site in duplex DNA. The scissile phosphodiester is attacked by the catalytic tyrosine of the enzyme, resulting in the formation of a DNA-(3'-phosphotyrosyl)-enzyme intermediate and the expulsion of a 5'-OH DNA strand. The free DNA strand then rotates around the intact phosphodiester bond on the opposing strand, thus removing DNA supercoils. Finally, in the religation step, the DNA 5'-OH attacks the covalent intermediate to expel the active-site tyrosine and restore the DNA phosphodiester backbone. Topoisomerases 1 enzymes (TOP1A and TOP1B) are essential for plant survival. The chain is DNA topoisomerase 1 beta from Arabidopsis thaliana (Mouse-ear cress).